The primary structure comprises 398 residues: S-adenosylmethionine synthase (398 aa).

His16 is a binding site for ATP. Asp18 contributes to the Mg(2+) binding site. Residue Glu44 coordinates K(+). Glu57 and Gln100 together coordinate L-methionine. The flexible loop stretch occupies residues 100–110 (QSPDIAQGVNE). Residues 175 to 177 (DAK), 242 to 243 (RF), Asp251, 257 to 258 (RK), Ala274, and Lys278 each bind ATP. Asp251 is an L-methionine binding site. Position 282 (Lys282) interacts with L-methionine.

This sequence belongs to the AdoMet synthase family. In terms of assembly, homotetramer; dimer of dimers. It depends on Mg(2+) as a cofactor. K(+) serves as cofactor.

It localises to the cytoplasm. The catalysed reaction is L-methionine + ATP + H2O = S-adenosyl-L-methionine + phosphate + diphosphate. It participates in amino-acid biosynthesis; S-adenosyl-L-methionine biosynthesis; S-adenosyl-L-methionine from L-methionine: step 1/1. In terms of biological role, catalyzes the formation of S-adenosylmethionine (AdoMet) from methionine and ATP. The overall synthetic reaction is composed of two sequential steps, AdoMet formation and the subsequent tripolyphosphate hydrolysis which occurs prior to release of AdoMet from the enzyme. This is S-adenosylmethionine synthase from Streptococcus agalactiae serotype III (strain NEM316).